The primary structure comprises 606 residues: R-linalool synthase, chloroplastic (606 aa).

The N-terminal 51 residues, 1–51 (MCTIISVNHHHVAILSKPKVKLFHTKNKRSASINLPWSLSPSSSAASRPIS), are a transit peptide targeting the chloroplast. (2E)-geranyl diphosphate contacts are provided by arginine 326, aspartate 363, aspartate 367, arginine 504, and aspartate 507. Residues aspartate 363 and aspartate 367 each contribute to the Mg(2+) site. The DDXXD motif motif lies at 363 to 367 (DDVYD). Mg(2+)-binding residues include aspartate 507, threonine 511, and glutamate 515.

Belongs to the terpene synthase family. Tpsb subfamily. Mg(2+) serves as cofactor. The cofactor is Mn(2+).

It localises to the plastid. The protein localises to the chloroplast. It carries out the reaction (2E)-geranyl diphosphate + H2O = (R)-linalool + diphosphate. The protein operates within secondary metabolite biosynthesis; terpenoid biosynthesis. Monoterpene synthase that catalyzes the formation of (3R)-linalool from geranyl diphosphate, but not from farnesyl diphosphate or geranylgeranyl diphosphate. This chain is R-linalool synthase, chloroplastic, found in Mentha aquatica (Water mint).